A 505-amino-acid chain; its full sequence is Forkhead box protein O4 (505 aa).

Disordered regions lie at residues 1–66, 175–244, and 257–276; these read MDPE…HSEP, SSWW…SPCP, and RPRS…PMRP. T32 bears the Phosphothreonine; by PKB/AKT1 mark. Residues 97 to 215 are required for interaction with FOXK1; the sequence is RRNAWGNQSY…RGRSKGPKKK (119 aa). Positions 100-188 form a DNA-binding region, fork-head; the sequence is AWGNQSYAEL…MLNPDGGKGG (89 aa). S197 is subject to Phosphoserine; by PKB/AKT1. Basic residues predominate over residues 205–216; that stretch reads LRGRSKGPKKKP. The segment covering 257 to 271 has biased composition (polar residues); that stretch reads RPRSSSNASTVSTRL. S262 carries the phosphoserine; by PKB/AKT1 modification.

In terms of assembly, interacts with CREBBP/CBP, MYOCD, SIRT1, SRF and YWHAZ. Acetylated by CREBBP/CBP and deacetylated by SIRT1. Binding of YWHAZ inhibits DNA-binding. Interacts with USP7; the interaction is enhanced in presence of hydrogen peroxide and occurs independently of TP53. Interacts with NLK, and this inhibits monoubiquitination and transcriptional activity. Interacts with FOXK1; the interaction inhibits MEF2C transactivation activity. Post-translationally, acetylation by CREBBP/CBP is induced by oxidative stress and inhibits transcriptional activity. Deacetylation by SIRT1 is NAD-dependent and stimulates transcriptional activity. In terms of processing, phosphorylation by PKB/AKT1 inhibits transcriptional activity and is responsible for cytoplasmic localization. May be phosphorylated at multiple sites by NLK. Monoubiquitinated; monoubiquitination is induced by oxidative stress and reduced by deacetylase inhibitors; results in its relocalization to the nucleus and its increased transcriptional activity. Deubiquitinated by USP7; deubiquitination is induced by oxidative stress; enhances its interaction with USP7 and consequently, deubiquitination; increases its translocation to the cytoplasm and inhibits its transcriptional activity. Hydrogene-peroxide-induced ubiquitination and USP7-mediated deubiquitination have no major effect on its protein stability. As to expression, strongly expressed in brown adipose tissue and weakly in white adipose tissue (at protein level). Expressed in skeletal muscle.

The protein resides in the cytoplasm. Its subcellular location is the nucleus. Transcription factor involved in the regulation of the insulin signaling pathway. Binds to insulin-response elements (IREs) and can activate transcription of IGFBP1. Down-regulates expression of HIF1A and suppresses hypoxia-induced transcriptional activation of HIF1A-modulated genes. Also involved in negative regulation of the cell cycle. Involved in increased proteasome activity in embryonic stem cells (ESCs) by activating expression of PSMD11 in ESCs, leading to enhanced assembly of the 26S proteasome, followed by higher proteasome activity. Represses smooth muscle cell differentiation by inhibiting the transcriptional coactivator activity of myocardin. The protein is Forkhead box protein O4 (Foxo4) of Mus musculus (Mouse).